The following is a 390-amino-acid chain: GTPase Obg (390 aa).

The Obg domain maps to 1-159 (MKFVDEATIK…RELRLELLLL (159 aa)). An OBG-type G domain is found at 160–333 (ADVGMLGLPN…LCDELADFMD (174 aa)). Residues 166 to 173 (GLPNAGKS), 191 to 195 (FTTLI), 213 to 216 (DIPG), 283 to 286 (NKTD), and 314 to 316 (AAV) each bind GTP. The Mg(2+) site is built by Ser173 and Thr193.

This sequence belongs to the TRAFAC class OBG-HflX-like GTPase superfamily. OBG GTPase family. As to quaternary structure, monomer. Mg(2+) serves as cofactor.

Its subcellular location is the cytoplasm. An essential GTPase which binds GTP, GDP and possibly (p)ppGpp with moderate affinity, with high nucleotide exchange rates and a fairly low GTP hydrolysis rate. Plays a role in control of the cell cycle, stress response, ribosome biogenesis and in those bacteria that undergo differentiation, in morphogenesis control. In Aliivibrio fischeri (strain MJ11) (Vibrio fischeri), this protein is GTPase Obg.